Reading from the N-terminus, the 75-residue chain is Protein SlyX homolog (75 aa).

Residues 56–75 form a disordered region; it reads KNMDSSNMEDPANEPPPPHY.

Belongs to the SlyX family.

The sequence is that of Protein SlyX homolog from Vibrio parahaemolyticus serotype O3:K6 (strain RIMD 2210633).